The sequence spans 403 residues: S-adenosylmethionine synthase (403 aa).

ATP is bound at residue His-16. Mg(2+) is bound at residue Asp-18. A K(+)-binding site is contributed by Glu-44. Glu-57 and Gln-110 together coordinate L-methionine. The flexible loop stretch occupies residues 110-120 (QSAHIAQGVDA). ATP contacts are provided by residues 175–177 (DSK), Asp-253, 259–260 (RK), Ala-276, and Lys-280. Asp-253 lines the L-methionine pocket. Lys-284 is a binding site for L-methionine.

It belongs to the AdoMet synthase family. In terms of assembly, homotetramer; dimer of dimers. Mg(2+) is required as a cofactor. The cofactor is K(+).

The protein resides in the cytoplasm. The catalysed reaction is L-methionine + ATP + H2O = S-adenosyl-L-methionine + phosphate + diphosphate. The protein operates within amino-acid biosynthesis; S-adenosyl-L-methionine biosynthesis; S-adenosyl-L-methionine from L-methionine: step 1/1. Functionally, catalyzes the formation of S-adenosylmethionine (AdoMet) from methionine and ATP. The overall synthetic reaction is composed of two sequential steps, AdoMet formation and the subsequent tripolyphosphate hydrolysis which occurs prior to release of AdoMet from the enzyme. This is S-adenosylmethionine synthase from Erythrobacter litoralis (strain HTCC2594).